The following is a 157-amino-acid chain: uncharacterized protein (157 aa).

This is an uncharacterized protein from Magallana gigas (Pacific oyster).